The primary structure comprises 121 residues: Large ribosomal subunit protein uL18 (121 aa).

It belongs to the universal ribosomal protein uL18 family. As to quaternary structure, part of the 50S ribosomal subunit; part of the 5S rRNA/L5/L18/L25 subcomplex. Contacts the 5S and 23S rRNAs.

Functionally, this is one of the proteins that bind and probably mediate the attachment of the 5S RNA into the large ribosomal subunit, where it forms part of the central protuberance. This chain is Large ribosomal subunit protein uL18, found in Methylibium petroleiphilum (strain ATCC BAA-1232 / LMG 22953 / PM1).